The primary structure comprises 68 residues: Large ribosomal subunit protein uL30 (68 aa).

This sequence belongs to the universal ribosomal protein uL30 family. Part of the 50S ribosomal subunit.

In Kocuria rhizophila (strain ATCC 9341 / DSM 348 / NBRC 103217 / DC2201), this protein is Large ribosomal subunit protein uL30.